The sequence spans 182 residues: Ribosome maturation factor RimM (182 aa).

Residues Glu-103–Phe-182 form the PRC barrel domain.

This sequence belongs to the RimM family. In terms of assembly, binds ribosomal protein uS19.

It is found in the cytoplasm. Its function is as follows. An accessory protein needed during the final step in the assembly of 30S ribosomal subunit, possibly for assembly of the head region. Essential for efficient processing of 16S rRNA. May be needed both before and after RbfA during the maturation of 16S rRNA. It has affinity for free ribosomal 30S subunits but not for 70S ribosomes. The sequence is that of Ribosome maturation factor RimM from Vibrio vulnificus (strain CMCP6).